A 118-amino-acid polypeptide reads, in one-letter code: Large ribosomal subunit protein bL20 (118 aa).

This sequence belongs to the bacterial ribosomal protein bL20 family.

In terms of biological role, binds directly to 23S ribosomal RNA and is necessary for the in vitro assembly process of the 50S ribosomal subunit. It is not involved in the protein synthesizing functions of that subunit. In Gluconobacter oxydans (strain 621H) (Gluconobacter suboxydans), this protein is Large ribosomal subunit protein bL20.